A 556-amino-acid chain; its full sequence is MNVMQENQIKLIEHIKQAVVQAVGLPEVEVPEILLEVPKDKKHGDYSTNIAMQLARVAKKAPRQIAESIVPELKKDNKLIKEVEIAGPGFINFYLDNAYLTELVPVILTEDHKYGESDFGKGEKFQIEFVSANPTGDLHLGHARGAAIGDSLANIMKMAGFDVSREYYINDAGNQINNLVLSAEARYFEALGLESEFPEDGYRGADIISLGKDLAAKYGDKYVNTSEEERRSVFRVDALAFETGKLRADLEEFRVSFDEWFSETSLYEENKVLPALERLRENGYIYEQDGATWLRTTDFEDDKDRVLIKSDGSYTYFLPDIAYHLNKLERGFDVLIDIWGADHHGYIPRMRAAIEALGYSPNQLEVEIIQLVHLFEDGVQVKMSKRTGKSVTMRDLIEEVGLDATRYFFAMRSSDTHMNFDMSLAKSTSNDNPVYYVQYAHARISSILRSGKEQGLEVTKDADMSLLQTEAEYDLLKVLGEFADVVAEAAAKRAPHRIVRYLNDLATAFHRFYNSNKVLDMDNLEVTQARLSLIKTAQITLRNGLTLLGVSAPEKM.

The short motif at 132–142 (ANPTGDLHLGH) is the 'HIGH' region element.

Belongs to the class-I aminoacyl-tRNA synthetase family. As to quaternary structure, monomer.

Its subcellular location is the cytoplasm. The catalysed reaction is tRNA(Arg) + L-arginine + ATP = L-arginyl-tRNA(Arg) + AMP + diphosphate. This Listeria welshimeri serovar 6b (strain ATCC 35897 / DSM 20650 / CCUG 15529 / CIP 8149 / NCTC 11857 / SLCC 5334 / V8) protein is Arginine--tRNA ligase.